Consider the following 281-residue polypeptide: Probable endonuclease 4 (281 aa).

Residues H67, H107, E144, D178, H181, H215, D228, H230, and E260 each contribute to the Zn(2+) site.

Belongs to the AP endonuclease 2 family. The cofactor is Zn(2+).

The catalysed reaction is Endonucleolytic cleavage to 5'-phosphooligonucleotide end-products.. Its function is as follows. Endonuclease IV plays a role in DNA repair. It cleaves phosphodiester bonds at apurinic or apyrimidinic (AP) sites, generating a 3'-hydroxyl group and a 5'-terminal sugar phosphate. The sequence is that of Probable endonuclease 4 from Methanocorpusculum labreanum (strain ATCC 43576 / DSM 4855 / Z).